Reading from the N-terminus, the 1227-residue chain is MSSKVEQLRAQLNERILVLDGGMGTMIQSYRLNEADFRGERFADWPCDLKGNNDLLVLSKPEVIAAIHNAYFEAGADIIETNTFNSTTIAMADYQMESLSAEINFAAAKLARACADEWTARTPEKPRYVAGVLGPTNRTASISPDVNDPAFRNITFDGLVAAYRESTKALVEGGADLILIETVFDTLNAKAAVFAVKTEFEALGVELPIMISGTITDASGRTLSGQTTEAFYNSLRHAEALTFGLNCALGPDELRQYVQELSRIAECYVTAHPNAGLPNAFGEYDLDADTMAKQIREWAQAGFLNIVGGCCGTTPQHIAAMSRAVEGLAPRKLPEIPVACRLSGLEPLNIGEDSLFVNVGERTNVTGSAKFKRLIKEEKYSEALDVARQQVENGAQIIDINMDEGMLDAEAAMVRFLNLIAGEPDIARVPIMIDSSKWDVIEKGLKCIQGKGIVNSISMKEGVDAFIHHAKLLRRYGAAVVVMAFDEQGQADTRARKIEICRRAYKILTEEVGFPPEDIIFDPNIFAVATGIEEHNNYAQDFIGACEDIKRELPHALISGGVSNVSFSFRGNDPVREAIHAVFLYYAIRNGMDMGIVNAGQLAIYDDLPAELRDAVEDVILNRRDDGTERLLELAEKYRGSKTDDTANAQQAEWRSWEVNKRLEYSLVKGITEFIEQDTEEARQQATRPIEVIEGPLMDGMNVVGDLFGEGKMFLPQVVKSARVMKQAVAYLEPFIEASKEQGKTNGKMVIATVKGDVHDIGKNIVGVVLQCNNYEIVDLGVMVPAEKILRTAKEVNADLIGLSGLITPSLDEMVNVAKEMERQGFTIPLLIGGATTSKAHTAVKIEQNYSGPTVYVQNASRTVGVVAALLSDTQRDDFVARTRKEYETVRIQHGRKKPRTPPVTLEAARDNDFAFDWQAYTPPVAHRLGVQEVEASIETLRNYIDWTPFFMTWSLAGKYPRILEDEVVGVEAQRLFKDANDMLDKLSAEKTLNPRGVVGLFPANRVGDDIEIYRDETRTHVINVSHHLRQQTEKTGFANYCLADFVAPKLSGKADYIGAFAVTGGLEEDALADAFEAQHDDYNKIMVKALADRLAEAFAEYLHERVRKVYWGYAPNENLSNEELIRENYQGIRPAPGYPACPEHTEKATIWELLEVEKHTGMKLTESFAMWPGASVSGWYFSHPDSKYYAVAQIQRDQVEDYARRKGMSVTEVERWLAPNLGYDAD.

The Hcy-binding domain maps to 2–325 (SSKVEQLRAQ…QHIAAMSRAV (324 aa)). 3 residues coordinate Zn(2+): Cys-247, Cys-310, and Cys-311. The Pterin-binding domain occupies 356–617 (FVNVGERTNV…LPAELRDAVE (262 aa)). Positions 650-744 (QQAEWRSWEV…FIEASKEQGK (95 aa)) constitute a B12-binding N-terminal domain. Methylcob(III)alamin is bound by residues Glu-694, 756–760 (GDVHD), His-759, Ser-804, Thr-808, and Ala-860. The 136-residue stretch at 746 to 881 (NGKMVIATVK…SDTQRDDFVA (136 aa)) folds into the B12-binding domain. The 331-residue stretch at 897–1227 (KKPRTPPVTL…LAPNLGYDAD (331 aa)) folds into the AdoMet activation domain. Residues Asp-946, Arg-1134, and 1189–1190 (YY) each bind S-adenosyl-L-methionine.

Belongs to the vitamin-B12 dependent methionine synthase family. It depends on methylcob(III)alamin as a cofactor. Zn(2+) is required as a cofactor.

The enzyme catalyses (6S)-5-methyl-5,6,7,8-tetrahydrofolate + L-homocysteine = (6S)-5,6,7,8-tetrahydrofolate + L-methionine. The protein operates within amino-acid biosynthesis; L-methionine biosynthesis via de novo pathway; L-methionine from L-homocysteine (MetH route): step 1/1. Functionally, catalyzes the transfer of a methyl group from methyl-cobalamin to homocysteine, yielding enzyme-bound cob(I)alamin and methionine. Subsequently, remethylates the cofactor using methyltetrahydrofolate. The protein is Methionine synthase (metH) of Escherichia coli (strain K12).